The chain runs to 346 residues: Nuclear distribution protein nudE-like 1 (346 aa).

A coiled-coil region spans residues 13–190 (KEEIVYWREL…LAVRERQTNG (178 aa)). Disordered stretches follow at residues 184–205 (RERQ…DCDK) and 325–346 (YDPP…PLSV). Over residues 188 to 200 (TNGTRKSAPSSPT) the composition is skewed to polar residues. Over residues 335-346 (PPSPPGMLPLSV) the composition is skewed to pro residues.

The protein belongs to the nudE family. In terms of processing, phosphorylated in mitosis.

It localises to the cytoplasm. The protein resides in the cytoskeleton. Its subcellular location is the microtubule organizing center. The protein localises to the centrosome. It is found in the spindle. In terms of biological role, required for organization of the cellular microtubule array and microtubule anchoring at the centrosome. Positively regulates the activity of the minus-end directed microtubule motor protein dynein. May enhance dynein-mediated microtubule sliding by targeting dynein to the microtubule plus end. Positively regulates lysosome peripheral distribution and ruffled border formation in osteoclasts. The chain is Nuclear distribution protein nudE-like 1 (ndel1) from Xenopus tropicalis (Western clawed frog).